Here is an 82-residue protein sequence, read N- to C-terminus: Sulfur carrier protein TusA (82 aa).

Catalysis depends on cysteine 19, which acts as the Cysteine persulfide intermediate.

It belongs to the sulfur carrier protein TusA family. In terms of assembly, interacts with IscS.

The protein localises to the cytoplasm. Its pathway is tRNA modification. In terms of biological role, sulfur carrier protein involved in sulfur trafficking in the cell. Part of a sulfur-relay system required for 2-thiolation during synthesis of 2-thiouridine of the modified wobble base 5-methylaminomethyl-2-thiouridine (mnm(5)s(2)U) in tRNA. Interacts with IscS and stimulates its cysteine desulfurase activity. Accepts an activated sulfur from IscS, which is then transferred to TusD, and thus determines the direction of sulfur flow from IscS to 2-thiouridine formation. Also appears to be involved in sulfur transfer for the biosynthesis of molybdopterin. This is Sulfur carrier protein TusA from Edwardsiella ictaluri (strain 93-146).